We begin with the raw amino-acid sequence, 292 residues long: UPF0749 protein Mb1856 (292 aa).

Positions 1 to 28 (MSENRPEPVAAETSAATTARHSQADAGA) are cleaved as a signal peptide. The segment at 1–30 (MSENRPEPVAAETSAATTARHSQADAGAHD) is disordered. 3 consecutive transmembrane segments (helical) span residues 68-88 (VFGT…VTQV), 152-172 (AALS…MITI), and 229-249 (VLSP…AAAM).

Belongs to the UPF0749 family.

Its subcellular location is the cell membrane. The protein is UPF0749 protein Mb1856 of Mycobacterium bovis (strain ATCC BAA-935 / AF2122/97).